Reading from the N-terminus, the 590-residue chain is L-fucose isomerase (590 aa).

Catalysis depends on proton acceptor residues glutamate 337 and aspartate 361. Positions 337, 361, and 528 each coordinate Mn(2+).

The protein belongs to the L-fucose isomerase family. The cofactor is Mn(2+).

The protein localises to the cytoplasm. The enzyme catalyses L-fucose = L-fuculose. The protein operates within carbohydrate degradation; L-fucose degradation; L-lactaldehyde and glycerone phosphate from L-fucose: step 1/3. In terms of biological role, converts the aldose L-fucose into the corresponding ketose L-fuculose. The chain is L-fucose isomerase from Bacteroides fragilis (strain ATCC 25285 / DSM 2151 / CCUG 4856 / JCM 11019 / LMG 10263 / NCTC 9343 / Onslow / VPI 2553 / EN-2).